A 429-amino-acid polypeptide reads, in one-letter code: MQNYTVRPAKSVRGEISVPGDKSISHRSIMFGSIASGVTTVTGFLRGEDALATLEAFRAMGVQIDDDGETVTIQGRGLHGLSEPTDVLDCGNSGTSMRLLTGLLAGQNFFSVLSGDKYLRARPMKRVVGPLAQMGARISGRAGGEKAPLAIQGSKLKGIEYDSPVSSAQVKSAIMLAGLYAGGETVVREPHLSRDHSERMLRAFGAHVETFPGGVKVRGGAELTGRDIVVPGDISSAAFFLVAGLIVPGSDLLIRGVGVNPTRTGIIDVLKGMGGDLELINQRDESGEPVADIRVRHSKLTAMEISGDVVPRAIDEFPAICVAASLAQGTTVVRDAAELRVKETDRISAMADNLKRAGVSIVETPDGMEITGVSSLKGCAADSFGDHRIAMSMMVAGLVAQNETSVSDVECIATSFPGFVNLLEGVVQR.

Residues Lys-22, Ser-23, and Arg-27 each coordinate 3-phosphoshikimate. Position 22 (Lys-22) interacts with phosphoenolpyruvate. Residues Gly-94 and Arg-122 each contribute to the phosphoenolpyruvate site. Positions 167, 169, 315, and 342 each coordinate 3-phosphoshikimate. A phosphoenolpyruvate-binding site is contributed by Gln-169. Asp-315 functions as the Proton acceptor in the catalytic mechanism. 2 residues coordinate phosphoenolpyruvate: Arg-346 and Arg-388.

This sequence belongs to the EPSP synthase family. Monomer.

The protein localises to the cytoplasm. The catalysed reaction is 3-phosphoshikimate + phosphoenolpyruvate = 5-O-(1-carboxyvinyl)-3-phosphoshikimate + phosphate. The protein operates within metabolic intermediate biosynthesis; chorismate biosynthesis; chorismate from D-erythrose 4-phosphate and phosphoenolpyruvate: step 6/7. In terms of biological role, catalyzes the transfer of the enolpyruvyl moiety of phosphoenolpyruvate (PEP) to the 5-hydroxyl of shikimate-3-phosphate (S3P) to produce enolpyruvyl shikimate-3-phosphate and inorganic phosphate. This is 3-phosphoshikimate 1-carboxyvinyltransferase from Citrifermentans bemidjiense (strain ATCC BAA-1014 / DSM 16622 / JCM 12645 / Bem) (Geobacter bemidjiensis).